A 291-amino-acid chain; its full sequence is 3-methylcatechol 2,3-dioxygenase (291 aa).

VOC domains are found at residues 5 to 119 and 143 to 264; these read RLGY…IYYG and GLGH…YGWG. Fe cation contacts are provided by H146, H210, and E260.

The protein belongs to the extradiol ring-cleavage dioxygenase family. In terms of assembly, homooctamer. Fe(2+) serves as cofactor.

The catalysed reaction is 3-methylcatechol + O2 = 2-hydroxy-6-oxo-2,4-heptadienoate + H(+). It functions in the pathway xenobiotic degradation; toluene degradation. The sequence is that of 3-methylcatechol 2,3-dioxygenase (todE) from Pseudomonas putida (strain ATCC 700007 / DSM 6899 / JCM 31910 / BCRC 17059 / LMG 24140 / F1).